A 347-amino-acid chain; its full sequence is Protein RecA (347 aa).

Residue 68–75 coordinates ATP; that stretch reads GPESSGKT.

Belongs to the RecA family.

Its subcellular location is the cytoplasm. Can catalyze the hydrolysis of ATP in the presence of single-stranded DNA, the ATP-dependent uptake of single-stranded DNA by duplex DNA, and the ATP-dependent hybridization of homologous single-stranded DNAs. It interacts with LexA causing its activation and leading to its autocatalytic cleavage. The protein is Protein RecA of Nocardia farcinica (strain IFM 10152).